We begin with the raw amino-acid sequence, 225 residues long: MRIDIITILPELLRSPFEASIMKRAIDKGLVEVYFHNLRDYTTNKQKSVDDYPFGGGAGMVMNVQPIDDCITHLKSERTYDEVIYMTPDGETLNQKMTNSMSLLGNIIILCGHYKGVDQRVRDHFITREISIGDYVLSGGELGALVLCDALIRLIPGVLSDETSALTDSFQDNLLSGPIYTRPADYKGWKVPEVLTSGHFAKIDKWREDMAYEHTKNRRPDLLDN.

S-adenosyl-L-methionine is bound by residues Gly-112 and 132–137 (IGDYVL).

The protein belongs to the RNA methyltransferase TrmD family. Homodimer.

It localises to the cytoplasm. It catalyses the reaction guanosine(37) in tRNA + S-adenosyl-L-methionine = N(1)-methylguanosine(37) in tRNA + S-adenosyl-L-homocysteine + H(+). Specifically methylates guanosine-37 in various tRNAs. The chain is tRNA (guanine-N(1)-)-methyltransferase from Flavobacterium psychrophilum (strain ATCC 49511 / DSM 21280 / CIP 103535 / JIP02/86).